The chain runs to 588 residues: Cyclin-dependent kinase 8 (588 aa).

The 323-residue stretch at 26 to 348 (FENSKEIGRG…CEEAMNDIYF (323 aa)) folds into the Protein kinase domain. Residues 32–40 (IGRGTYGLV) and lysine 60 each bind ATP. The active-site Proton acceptor is the aspartate 158. Disordered stretches follow at residues 376-426 (MTVA…GAHP), 510-529 (PGPSGYYPQRPGQPTGAVPG), and 546-588 (MRAP…QYHR). The segment covering 382 to 426 (QAQQQHQQQQVQMQQQPQMGQQQMMGQPQMVQPQMGQPPMGGAHP) has biased composition (low complexity). Residues 557 to 588 (MPGRGMAPPQMGQQQPGPNQQQQQQWQQQYHR) show a composition bias toward low complexity.

This sequence belongs to the protein kinase superfamily. CMGC Ser/Thr protein kinase family. CDC2/CDKX subfamily. As to quaternary structure, component of the Mediator complex. Mg(2+) is required as a cofactor.

It localises to the nucleus. It carries out the reaction L-seryl-[protein] + ATP = O-phospho-L-seryl-[protein] + ADP + H(+). It catalyses the reaction L-threonyl-[protein] + ATP = O-phospho-L-threonyl-[protein] + ADP + H(+). The enzyme catalyses [DNA-directed RNA polymerase] + ATP = phospho-[DNA-directed RNA polymerase] + ADP + H(+). In terms of biological role, component of the Mediator complex, a coactivator involved in regulated gene transcription of nearly all RNA polymerase II-dependent genes. Mediator functions as a bridge to convey information from gene-specific regulatory proteins to the basal RNA polymerase II transcription machinery. Mediator is recruited to promoters by direct interactions with regulatory proteins and serves as a scaffold for the assembly of a functional pre-initiation complex with RNA polymerase II and the general transcription factors. Phosphorylates the CTD (C-terminal domain) of the large subunit of RNA polymerase II (RNAp II), which may inhibit the formation of a transcription initiation complex. The polypeptide is Cyclin-dependent kinase 8 (cdk-8) (Caenorhabditis elegans).